A 216-amino-acid polypeptide reads, in one-letter code: Protein-L-isoaspartate O-methyltransferase (216 aa).

S62 is a catalytic residue.

This sequence belongs to the methyltransferase superfamily. L-isoaspartyl/D-aspartyl protein methyltransferase family.

It is found in the cytoplasm. It carries out the reaction [protein]-L-isoaspartate + S-adenosyl-L-methionine = [protein]-L-isoaspartate alpha-methyl ester + S-adenosyl-L-homocysteine. In terms of biological role, catalyzes the methyl esterification of L-isoaspartyl residues in peptides and proteins that result from spontaneous decomposition of normal L-aspartyl and L-asparaginyl residues. It plays a role in the repair and/or degradation of damaged proteins. The chain is Protein-L-isoaspartate O-methyltransferase from Methanospirillum hungatei JF-1 (strain ATCC 27890 / DSM 864 / NBRC 100397 / JF-1).